Consider the following 350-residue polypeptide: Protein memo-1 homolog (350 aa).

This sequence belongs to the MEMO1 family. As to quaternary structure, interacts with rho-1. In terms of tissue distribution, expressed in neuronal and non-neuronal cells in the head and tail, pharyngeal cells, spermatheca, distal tip cells, anchor cell and the intestine.

Plays a role in the oxidative stress response and the maintenance of longevity by regulating the interaction between GTPase rho-1 and oxidase bli-3. In turn, this serves to modulate bli-3 activity and the control of reactive oxygen species production. May control cell migration by relaying extracellular chemotactic signals to the microtubule cytoskeleton. The sequence is that of Protein memo-1 homolog from Caenorhabditis elegans.